We begin with the raw amino-acid sequence, 294 residues long: DNA adenine methyltransferase YhdJ (294 aa).

Positions 275–294 (TGNLSKRSRLSEVDPDLITK) are disordered. The segment covering 283 to 294 (RLSEVDPDLITK) has biased composition (basic and acidic residues).

It belongs to the N(4)/N(6)-methyltransferase family.

It carries out the reaction a 2'-deoxyadenosine in DNA + S-adenosyl-L-methionine = an N(6)-methyl-2'-deoxyadenosine in DNA + S-adenosyl-L-homocysteine + H(+). Functionally, a beta subtype methylase, recognizes the double-stranded sequence 5'-ATGCAT-3' and methylates A-5. This is DNA adenine methyltransferase YhdJ (yhdJ) from Escherichia coli (strain K12).